The primary structure comprises 318 residues: tRNA pseudouridine synthase B (318 aa).

Residue aspartate 47 is the Nucleophile of the active site.

Belongs to the pseudouridine synthase TruB family. Type 1 subfamily.

It carries out the reaction uridine(55) in tRNA = pseudouridine(55) in tRNA. In terms of biological role, responsible for synthesis of pseudouridine from uracil-55 in the psi GC loop of transfer RNAs. The sequence is that of tRNA pseudouridine synthase B from Aliivibrio salmonicida (strain LFI1238) (Vibrio salmonicida (strain LFI1238)).